The following is a 95-amino-acid chain: Signal recognition particle 19 kDa protein (95 aa).

This sequence belongs to the SRP19 family. Part of the signal recognition particle protein translocation system, which is composed of SRP and FtsY. Archaeal SRP consists of a 7S RNA molecule of 300 nucleotides and two protein subunits: SRP54 and SRP19.

Its subcellular location is the cytoplasm. Functionally, involved in targeting and insertion of nascent membrane proteins into the cytoplasmic membrane. Binds directly to 7S RNA and mediates binding of the 54 kDa subunit of the SRP. The chain is Signal recognition particle 19 kDa protein from Methanococcoides burtonii (strain DSM 6242 / NBRC 107633 / OCM 468 / ACE-M).